The primary structure comprises 290 residues: Shikimate dehydrogenase (NADP(+)) (290 aa).

Residues 20 to 22 (SLS) and Thr67 each bind shikimate. Catalysis depends on Lys71, which acts as the Proton acceptor. The shikimate site is built by Asn92 and Asp107. NADP(+) contacts are provided by residues 132–136 (GAGGA) and Met228. Tyr230 contributes to the shikimate binding site. Gly251 provides a ligand contact to NADP(+).

It belongs to the shikimate dehydrogenase family. In terms of assembly, homodimer.

The catalysed reaction is shikimate + NADP(+) = 3-dehydroshikimate + NADPH + H(+). It participates in metabolic intermediate biosynthesis; chorismate biosynthesis; chorismate from D-erythrose 4-phosphate and phosphoenolpyruvate: step 4/7. Functionally, involved in the biosynthesis of the chorismate, which leads to the biosynthesis of aromatic amino acids. Catalyzes the reversible NADPH linked reduction of 3-dehydroshikimate (DHSA) to yield shikimate (SA). The protein is Shikimate dehydrogenase (NADP(+)) of Geobacter sp. (strain M21).